We begin with the raw amino-acid sequence, 620 residues long: Ion-translocating oxidoreductase complex subunit C (620 aa).

4Fe-4S ferredoxin-type domains lie at 366–397 (TEMG…QQLY) and 407–436 (KARN…VQYY). [4Fe-4S] cluster-binding residues include Cys377, Cys380, Cys383, Cys387, Cys416, Cys419, Cys422, and Cys426.

The protein belongs to the 4Fe4S bacterial-type ferredoxin family. RnfC subfamily. As to quaternary structure, the complex is composed of six subunits: RnfA, RnfB, RnfC, RnfD, RnfE and RnfG. [4Fe-4S] cluster serves as cofactor.

It localises to the cell inner membrane. Part of a membrane-bound complex that couples electron transfer with translocation of ions across the membrane. This is Ion-translocating oxidoreductase complex subunit C from Yersinia pestis bv. Antiqua (strain Antiqua).